The primary structure comprises 390 residues: Transforming growth factor beta-1 proprotein (390 aa).

The first 29 residues, 1 to 29 (MPPSGLRLLPLLLPLPWLLVLTPGRPAAG), serve as a signal peptide directing secretion. The straightjacket domain stretch occupies residues 30-74 (LSTCKTIDMELVKRKRIEAIRGQILSKLRLASPPSQGEVPPGPLP). Residues 75–271 (EAVLALYNST…ATPLERAQHL (197 aa)) form an arm domain region. N-linked (GlcNAc...) asparagine glycosylation is found at Asn-82, Asn-136, and Asn-176. Residues 226-252 (DSKDNVLHVEINGISPKRRGDLGTIHD) form a bowtie tail region. A Cell attachment site motif is present at residues 244 to 246 (RGD). 4 cysteine pairs are disulfide-bonded: Cys-285–Cys-294, Cys-293–Cys-356, Cys-322–Cys-387, and Cys-326–Cys-389.

Belongs to the TGF-beta family. As to quaternary structure, homodimer; disulfide-linked. Interacts with the serine proteases, HTRA1 and HTRA3: the interaction with either inhibits TGFB1-mediated signaling and the HTRA protease activity is required for this inhibition. May interact with THSD4; this interaction may lead to sequestration by FBN1 microfibril assembly and attenuation of TGFB signaling. Interacts with CD109, DPT and ASPN. Interacts with EFEMP2. Interacts with TSKU; the interaction contributes to regulation of the hair cycle. Interacts with TGFBR3. In terms of assembly, homodimer; disulfide-linked. Interacts with transforming growth factor beta-1 (TGF-beta-1) chain; interaction is non-covalent and maintains TGF-beta-1 in a latent state; each latency-associated peptide (LAP) monomer interacts with TGF-beta-1 in the other monomer. Interacts with LTBP1; leading to regulation of TGF-beta-1 activation. Interacts with LRRC32/GARP; leading to regulation of TGF-beta-1 activation on the surface of activated regulatory T-cells (Tregs). Interacts with LRRC33/NRROS; leading to regulation of TGF-beta-1 activation in macrophages and microglia. Interacts (via cell attachment site) with integrins ITGAV and ITGB6 (ITGAV:ITGB6), leading to release of the active TGF-beta-1. Interacts with NREP; the interaction results in a decrease in TGFB1 autoinduction. Interacts with HSP90AB1; inhibits latent TGFB1 activation. Homodimer; disulfide-linked. Interacts with TGF-beta receptors (TGFBR1 and TGFBR2), leading to signal transduction. In terms of processing, transforming growth factor beta-1 proprotein: The precursor proprotein is cleaved in the Golgi apparatus by FURIN to form Transforming growth factor beta-1 (TGF-beta-1) and Latency-associated peptide (LAP) chains, which remain non-covalently linked, rendering TGF-beta-1 inactive. N-glycosylated. Deglycosylation leads to activation of Transforming growth factor beta-1 (TGF-beta-1); mechanisms triggering deglycosylation-driven activation of TGF-beta-1 are however unclear. As to expression, abundant in the bone matrix. Expressed in cardiomyocytes.

It localises to the secreted. Its subcellular location is the extracellular space. The protein localises to the extracellular matrix. In terms of biological role, transforming growth factor beta-1 proprotein: Precursor of the Latency-associated peptide (LAP) and Transforming growth factor beta-1 (TGF-beta-1) chains, which constitute the regulatory and active subunit of TGF-beta-1, respectively. Functionally, required to maintain the Transforming growth factor beta-1 (TGF-beta-1) chain in a latent state during storage in extracellular matrix. Associates non-covalently with TGF-beta-1 and regulates its activation via interaction with 'milieu molecules', such as LTBP1, LRRC32/GARP and LRRC33/NRROS, that control activation of TGF-beta-1. Interaction with LRRC33/NRROS regulates activation of TGF-beta-1 in macrophages and microglia. Interaction with LRRC32/GARP controls activation of TGF-beta-1 on the surface of activated regulatory T-cells (Tregs). Interaction with integrins (ITGAV:ITGB6 or ITGAV:ITGB8) results in distortion of the Latency-associated peptide chain and subsequent release of the active TGF-beta-1. Multifunctional protein that regulates the growth and differentiation of various cell types and is involved in various processes, such as normal development, immune function, microglia function and responses to neurodegeneration. Activation into mature form follows different steps: following cleavage of the proprotein in the Golgi apparatus, Latency-associated peptide (LAP) and Transforming growth factor beta-1 (TGF-beta-1) chains remain non-covalently linked rendering TGF-beta-1 inactive during storage in extracellular matrix. At the same time, LAP chain interacts with 'milieu molecules', such as LTBP1, LRRC32/GARP and LRRC33/NRROS that control activation of TGF-beta-1 and maintain it in a latent state during storage in extracellular milieus. TGF-beta-1 is released from LAP by integrins (ITGAV:ITGB6 or ITGAV:ITGB8): integrin-binding to LAP stabilizes an alternative conformation of the LAP bowtie tail and results in distortion of the LAP chain and subsequent release of the active TGF-beta-1. Once activated following release of LAP, TGF-beta-1 acts by binding to TGF-beta receptors (TGFBR1 and TGFBR2), which transduce signal. While expressed by many cells types, TGF-beta-1 only has a very localized range of action within cell environment thanks to fine regulation of its activation by Latency-associated peptide chain (LAP) and 'milieu molecules'. Plays an important role in bone remodeling: acts as a potent stimulator of osteoblastic bone formation, causing chemotaxis, proliferation and differentiation in committed osteoblasts. Can promote either T-helper 17 cells (Th17) or regulatory T-cells (Treg) lineage differentiation in a concentration-dependent manner. At high concentrations, leads to FOXP3-mediated suppression of RORC and down-regulation of IL-17 expression, favoring Treg cell development. At low concentrations in concert with IL-6 and IL-21, leads to expression of the IL-17 and IL-23 receptors, favoring differentiation to Th17 cells. Stimulates sustained production of collagen through the activation of CREB3L1 by regulated intramembrane proteolysis (RIP). Mediates SMAD2/3 activation by inducing its phosphorylation and subsequent translocation to the nucleus. Positively regulates odontoblastic differentiation in dental papilla cells, via promotion of IPO7-mediated translocation of phosphorylated SMAD2 to the nucleus and subsequent transcription of target genes. Can induce epithelial-to-mesenchymal transition (EMT) and cell migration in various cell types. This Rattus norvegicus (Rat) protein is Transforming growth factor beta-1 proprotein (Tgfb1).